Here is a 110-residue protein sequence, read N- to C-terminus: UPF0122 protein YlxM (110 aa).

This sequence belongs to the UPF0122 family.

Might take part in the signal recognition particle (SRP) pathway. This is inferred from the conservation of its genetic proximity to ftsY/ffh. May be a regulatory protein. The sequence is that of UPF0122 protein YlxM (ylxM) from Bacillus subtilis (strain 168).